Consider the following 798-residue polypeptide: MALQMFVTYSPWNCLLLLVALECSEASSDLNESANSTAQYASNAWFAAASSEPEEGISVFELDYDYVQIPYEVTLWILLASLAKIGFHLYHRLPGLMPESCLLILVGALVGGIIFGTDHKSPPVMDSSIYFLYLLPPIVLEGGYFMPTRPFFENIGSILWWAVLGALINALGIGLSLYLICQVKAFGLGDVNLLQNLLFGSLISAVDPVAVLAVFEEARVNEQLYMMIFGEALLNDGITVVLYNMLIAFTKMHKFEDIETVDILAGCARFIVVGLGGVLFGIVFGFISAFITRFTQNISAIEPLIVFMFSYLSYLAAETLYLSGILAITACAVTMKKYVEENVSQTSYTTIKYFMKMLSSVSETLIFIFMGVSTVGKNHEWNWAFICFTLAFCQIWRAISVFALFYISNQFRTFPFSIKDQCIIFYSGVRGAGSFSLAFLLPLSLFPRKKMFVTATLVVIYFTVFIQGITVGPLVRYLDVKKTNKKESINEELHIRLMDHLKAGIEDVCGHWSHYQVRDKFKKFDHRYLRKILIRKNLPKSSIVSLYKKLEMKQAIEMVETGILSSTAFSIPHQAQRIQGIKRLSPEDVESIRDILTSNMYQVRQRTLSYNKYNLKPQTSEKQAKEILIRRQNTLRESMRKGHSLPWGKPAGTKNIRYLSYPYGNPQSAGRDTRAAGFSDDDSSDPGSPSITFSACSRIGSLQKQEAQEIIPMKSLHRGRKAFSFGYQRNTSQEEYLGGVRRVALRPKPLFHAVDEEGESGGESEGKASLVEVRSRWTADHGHGRDHHRSHSPLLQKK.

At 1 to 13 (MALQMFVTYSPWN) the chain is on the cytoplasmic side. The name=A/M1 intramembrane region spans 14–28 (CLLLLVALECSEASS). The Cytoplasmic segment spans residues 29-69 (DLNESANSTAQYASNAWFAAASSEPEEGISVFELDYDYVQI). An intramembrane region (name=B/M2) is located at residues 70–90 (PYEVTLWILLASLAKIGFHLY). At 91 to 94 (HRLP) the chain is on the cytoplasmic side. A helical transmembrane segment spans residues 95 to 115 (GLMPESCLLILVGALVGGIIF). Topologically, residues 116–127 (GTDHKSPPVMDS) are extracellular. Residues 128 to 148 (SIYFLYLLPPIVLEGGYFMPT) traverse the membrane as a helical segment. At 149–154 (RPFFEN) the chain is on the cytoplasmic side. Residues 155–175 (IGSILWWAVLGALINALGIGL) traverse the membrane as a helical segment. Over 176–196 (SLYLICQVKAFGLGDVNLLQN) the chain is Extracellular. A helical membrane pass occupies residues 197–217 (LLFGSLISAVDPVAVLAVFEE). Topologically, residues 218-226 (ARVNEQLYM) are cytoplasmic. The chain crosses the membrane as a helical span at residues 227–247 (MIFGEALLNDGITVVLYNMLI). At 248–270 (AFTKMHKFEDIETVDILAGCARF) the chain is on the extracellular side. A helical membrane pass occupies residues 271–291 (IVVGLGGVLFGIVFGFISAFI). Topologically, residues 292-304 (TRFTQNISAIEPL) are cytoplasmic. The helical transmembrane segment at 305-325 (IVFMFSYLSYLAAETLYLSGI) threads the bilayer. Over 326–356 (LAITACAVTMKKYVEENVSQTSYTTIKYFMK) the chain is Extracellular. An N-linked (GlcNAc...) asparagine glycan is attached at asparagine 342. A helical membrane pass occupies residues 357–373 (MLSSVSETLIFIFMGVS). Over 374 to 384 (TVGKNHEWNWA) the chain is Cytoplasmic. The chain crosses the membrane as a helical span at residues 385-405 (FICFTLAFCQIWRAISVFALF). The Extracellular segment spans residues 406–420 (YISNQFRTFPFSIKD). An intramembrane region (name=L) is located at residues 421–441 (QCIIFYSGVRGAGSFSLAFLL). The Extracellular portion of the chain corresponds to 442–450 (PLSLFPRKK). A helical transmembrane segment spans residues 451 to 471 (MFVTATLVVIYFTVFIQGITV). Residues 472-798 (GPLVRYLDVK…RSHSPLLQKK (327 aa)) lie on the Cytoplasmic side of the membrane. Disordered regions lie at residues 662-690 (PYGN…GSPS) and 776-798 (RWTA…LQKK). A compositionally biased stretch (basic residues) spans 784–798 (GRDHHRSHSPLLQKK).

Belongs to the monovalent cation:proton antiporter 1 (CPA1) transporter (TC 2.A.36) family. Homodimer; each protomer has one site for sodium and one site for proton binding. Interacts with CHP1 and CHP2. May be phosphorylated.

It localises to the basolateral cell membrane. Its subcellular location is the apical cell membrane. The protein resides in the zymogen granule membrane. It carries out the reaction Na(+)(in) + H(+)(out) = Na(+)(out) + H(+)(in). The catalysed reaction is Na(+)(out) + NH4(+)(in) = Na(+)(in) + NH4(+)(out). Functionally, electroneutral antiporter that exchanges sodium for protons or ammonium ions at the basolateral membrane of epithelia to regulate cell volume and intracellular pH upon hypertonic conditions. As part of transcellular ammonia transport in renal tubules, mediates basolateral ammonium extrusion in the medullary thick ascending limb, regulating the corticopapillary ammonium gradient and overall renal acid excretion. Mediates sodium:proton exchange in gastric parietal cells secondary to cAMP-dependent acid secretion and hyperosmolarity. Possibly coupled to chloride:bicarbonate antiporter, enables loading of parietal cells with sodium and chloride ions to maintain cell volume and normal gastric acid secretion. Functions as a sodium sensor in neurons of organum vasculosum of the lamina terminalis where it regulates water intake in response to increased sodium concentration in body fluids. In Homo sapiens (Human), this protein is Sodium/hydrogen exchanger 4 (SLC9A4).